Here is a 307-residue protein sequence, read N- to C-terminus: Metapyrocatechase (307 aa).

VOC domains are found at residues 7-122 (RPGH…LYAD) and 150-269 (RFDH…VFCG). Fe cation-binding residues include His-153, His-214, and Glu-265.

This sequence belongs to the extradiol ring-cleavage dioxygenase family. In terms of assembly, homotetramer. Requires Fe(2+) as cofactor.

It carries out the reaction catechol + O2 = (2Z,4E)-2-hydroxy-6-oxohexa-2,4-dienoate + H(+). It participates in xenobiotic degradation; toluene degradation. The sequence is that of Metapyrocatechase (bztE) from Pseudomonas aeruginosa.